The sequence spans 322 residues: Protein mono-ADP-ribosyltransferase PARP16 (322 aa).

The Cytoplasmic portion of the chain corresponds to 1–287 (MQLSNRAAAR…RASSQLSWLS (287 aa)). Residues 5-91 (NRAAAREAAS…AWDLVSWILS (87 aa)) form the PARP alpha-helical domain. The PARP catalytic domain maps to 94 to 279 (ILTIHSAKKA…VYSQKQPKRA (186 aa)). Positions 152, 182, and 254 each coordinate NAD(+). A helical membrane pass occupies residues 288–308 (SHWFVIMMSLYLLLLLIVSVT). Topologically, residues 309–322 (NSSVFHHFWNRVKR) are lumenal.

Belongs to the ARTD/PARP family. As to quaternary structure, interacts with KPNB1. In terms of processing, auto-mono-ADP-ribosylated.

It localises to the endoplasmic reticulum membrane. The catalysed reaction is L-aspartyl-[protein] + NAD(+) = 4-O-(ADP-D-ribosyl)-L-aspartyl-[protein] + nicotinamide. The enzyme catalyses L-lysyl-[protein] + NAD(+) = N(6)-(ADP-D-ribosyl)-L-lysyl-[protein] + nicotinamide + H(+). It catalyses the reaction L-glutamyl-[protein] + NAD(+) = 5-O-(ADP-D-ribosyl)-L-glutamyl-[protein] + nicotinamide. In absence of activation signal, PARP16 is autoinhibited by the PARP alpha-helical domain (also named HD region), which prevents effective NAD(+)-binding. Activity is highly stimulated by signals, which unfold the PARP alpha-helical domain, relieving autoinhibition. Its function is as follows. Intracellular mono-ADP-ribosyltransferase that plays a role in different processes, such as protein translation and unfolded protein response (UPR), through the mono-ADP-ribosylation of proteins involved in those processes. Acts as an inhibitor of protein translation by catalyzing mono-ADP-ribosylation of ribosomal subunits, such as RPL14 and RPS6, thereby inhibiting polysome assembly and mRNA loading. Mono-ADP-ribosylation of ribosomal subunits is promoted by NMNAT2. Involved in the unfolded protein response (UPR) by ADP-ribosylating and activating EIF2AK3 and ERN1, two important UPR effectors. May also mediate mono-ADP-ribosylation of karyopherin KPNB1 a nuclear import factor. May not modify proteins on arginine or cysteine residues compared to other mono-ADP-ribosyltransferases. This is Protein mono-ADP-ribosyltransferase PARP16 from Mus musculus (Mouse).